The following is a 1025-amino-acid chain: Multidrug resistance protein MdtC (1025 aa).

12 helical membrane passes run 3-23, 333-353, 360-380, 387-407, 431-451, 463-483, 528-548, 853-873, 875-895, 897-917, 953-973, and 984-1004; these read FFAL…AITL, EVEQ…FLFL, IIPA…MYLC, LSLM…IVVL, VGFT…PLLL, FAVT…TLTP, LVGV…ISIP, VILI…LYES, VHPL…LLAL, LFNA…IGIV, PIMM…LSGG, and ITIV…TPVV.

The protein belongs to the resistance-nodulation-cell division (RND) (TC 2.A.6) family. MdtC subfamily. In terms of assembly, part of a tripartite efflux system composed of MdtA, MdtB and MdtC. MdtC forms a heteromultimer with MdtB.

Its subcellular location is the cell inner membrane. Its function is as follows. The MdtABC tripartite complex confers resistance against novobiocin and deoxycholate. The sequence is that of Multidrug resistance protein MdtC from Escherichia coli O139:H28 (strain E24377A / ETEC).